Here is a 335-residue protein sequence, read N- to C-terminus: Cell division protein ZipA (335 aa).

At 1–6 (MENLQL) the chain is on the periplasmic side. The chain crosses the membrane as a helical span at residues 7-27 (VLFVLGAVAIIAVLVHGFWSI). Topologically, residues 28–335 (RRQQPKSLKE…SYLQRIRAQM (308 aa)) are cytoplasmic. Disordered regions lie at residues 37-128 (ESPM…NEEV) and 163-185 (RPAP…VSVE). The span at 170-185 (APQSVAPASVEPVSVE) shows a compositional bias: low complexity.

It belongs to the ZipA family. As to quaternary structure, interacts with FtsZ via their C-terminal domains.

The protein resides in the cell inner membrane. Its function is as follows. Essential cell division protein that stabilizes the FtsZ protofilaments by cross-linking them and that serves as a cytoplasmic membrane anchor for the Z ring. Also required for the recruitment to the septal ring of downstream cell division proteins. The protein is Cell division protein ZipA of Shewanella loihica (strain ATCC BAA-1088 / PV-4).